The primary structure comprises 89 residues: Small ribosomal subunit protein uS15 (89 aa).

It belongs to the universal ribosomal protein uS15 family. Part of the 30S ribosomal subunit. Forms a bridge to the 50S subunit in the 70S ribosome, contacting the 23S rRNA.

Its function is as follows. One of the primary rRNA binding proteins, it binds directly to 16S rRNA where it helps nucleate assembly of the platform of the 30S subunit by binding and bridging several RNA helices of the 16S rRNA. Forms an intersubunit bridge (bridge B4) with the 23S rRNA of the 50S subunit in the ribosome. This Burkholderia mallei (strain NCTC 10247) protein is Small ribosomal subunit protein uS15.